The primary structure comprises 349 residues: MSKMSEEEEFLLFKNISLVGPWDGPQYHLAPVWAFHLQAVFMGFVFFVGTPLNATVLVATLRYRKLRQPLNYILVNVSLGGFIYCIFSVFIVFITSCYGYFVFGRHVCALEAFLGCTAGLVTGWSLAFLAFERYIIICKPFGNFRFSSKHALMVVVATWTIGIGVSIPPFFGWSRFVPEGLQCSCGPDWYTVGTKYYSEYYTWFLFIFCYIVPLSLICFSYSQLLGALRAVAAQQQESASTQKAEREVSHMVVVMVGSFCLCYTPYAALAMYIVNNRNHGVDLRLVTIPAFFSKSACVYNPIIYCFMNKQFRACIMEMVCGKPMTDESELSSSQKTEVSTVSSSQVGPN.

At 1–34 the chain is on the extracellular side; the sequence is MSKMSEEEEFLLFKNISLVGPWDGPQYHLAPVWA. Asn-15 carries an N-linked (GlcNAc...) asparagine glycan. Residues 35-59 traverse the membrane as a helical segment; that stretch reads FHLQAVFMGFVFFVGTPLNATVLVA. The Cytoplasmic segment spans residues 60-71; the sequence is TLRYRKLRQPLN. Residues 72–97 traverse the membrane as a helical segment; the sequence is YILVNVSLGGFIYCIFSVFIVFITSC. The Extracellular portion of the chain corresponds to 98 to 111; it reads YGYFVFGRHVCALE. An intrachain disulfide couples Cys-108 to Cys-185. Residues 112 to 131 form a helical membrane-spanning segment; sequence AFLGCTAGLVTGWSLAFLAF. Over 132-150 the chain is Cytoplasmic; sequence ERYIIICKPFGNFRFSSKH. Residues 151–174 traverse the membrane as a helical segment; sequence ALMVVVATWTIGIGVSIPPFFGWS. The Extracellular portion of the chain corresponds to 175-200; sequence RFVPEGLQCSCGPDWYTVGTKYYSEY. The helical transmembrane segment at 201-228 threads the bilayer; sequence YTWFLFIFCYIVPLSLICFSYSQLLGAL. Residues 229–250 lie on the Cytoplasmic side of the membrane; the sequence is RAVAAQQQESASTQKAEREVSH. Residues 251–274 traverse the membrane as a helical segment; that stretch reads MVVVMVGSFCLCYTPYAALAMYIV. Residues 275–282 lie on the Extracellular side of the membrane; it reads NNRNHGVD. The helical transmembrane segment at 283–307 threads the bilayer; it reads LRLVTIPAFFSKSACVYNPIIYCFM. The residue at position 294 (Lys-294) is an N6-(retinylidene)lysine. Topologically, residues 308–349 are cytoplasmic; that stretch reads NKQFRACIMEMVCGKPMTDESELSSSQKTEVSTVSSSQVGPN. The interval 327–349 is disordered; it reads ESELSSSQKTEVSTVSSSQVGPN. The span at 330-349 shows a compositional bias: polar residues; it reads LSSSQKTEVSTVSSSQVGPN.

It belongs to the G-protein coupled receptor 1 family. Opsin subfamily. Phosphorylated on some or all of the serine and threonine residues present in the C-terminal region.

Its subcellular location is the cell membrane. The protein localises to the photoreceptor inner segment. It is found in the cell projection. It localises to the cilium. The protein resides in the photoreceptor outer segment. Its subcellular location is the cytoplasm. The protein localises to the perinuclear region. Its function is as follows. Visual pigments are the light-absorbing molecules that mediate vision. They consist of an apoprotein, opsin, covalently linked to cis-retinal. Required for the maintenance of cone outer segment organization in the ventral retina, but not essential for the maintenance of functioning cone photoreceptors. Involved in ensuring correct abundance and localization of retinal membrane proteins. May increase spectral sensitivity in dim light. In Bos taurus (Bovine), this protein is Short-wave-sensitive opsin 1 (OPN1SW).